The following is a 1441-amino-acid chain: Gag-Pol polyprotein (1441 aa).

The N-myristoyl glycine; by host moiety is linked to residue Gly2. The short motif at 16 to 22 is the Nuclear export signal element; that stretch reads FEKIRLK. Positions 26 to 32 match the Nuclear localization signal motif; that stretch reads KKCYRLK. Residues 204–226 are disordered; the sequence is THPQQQPAQPGGGLRTPSGSDIA. 2 CCHC-type zinc fingers span residues 386–403 and 407–424; these read PICFNCNKEGHVARFFKA and KGCWNCGAMDHQKAQCPK. Residues 444 to 466 show a composition bias toward polar residues; that stretch reads TGELSGTRGDSNSSTIRGETSAE. The interval 444–494 is disordered; that stretch reads TGELSGTRGDSNSSTIRGETSAENSEHLSEIRERAQAEDEGGEERGGFSFP. Residues 467-480 show a composition bias toward basic and acidic residues; the sequence is NSEHLSEIRERAQA. The 72-residue stretch at 513–584 folds into the Peptidase A2 domain; it reads IRALLDTGAD…TPIDIIGRNI (72 aa). Residue Asp518 is the For protease activity; shared with dimeric partner of the active site. Positions 640–830 constitute a Reverse transcriptase domain; the sequence is EGKISRVDPG…PPFHWMGYEL (191 aa). Mg(2+) is bound by residues Asp706, Asp781, and Asp782. Positions 823–831 are RT 'primer grip'; that stretch reads FHWMGYELH. Residues 994-1010 carry the Tryptophan repeat motif motif; sequence WEDWWHEYWQCTWIPEV. The RNase H type-1 domain occupies 1030 to 1153; sequence LEGVETYYVD…IDKLVSSGIR (124 aa). Residues Asp1039, Glu1074, Asp1094, and Asp1145 each coordinate Mg(2+). The Integrase-type zinc-finger motif lies at 1159-1200; it reads QNIEPAQEEHEKYHSNEAQLREKFHLPALVAKQIVQSCSKCC. Zn(2+) is bound by residues His1168, His1172, Cys1196, and Cys1199. One can recognise an Integrase catalytic domain in the interval 1210-1360; sequence TDASLGVWQI…TAGERIVNMI (151 aa). Residues Asp1220 and Asp1272 each contribute to the Mg(2+) site. Residues 1379-1426 constitute a DNA-binding region (integrase-type); that stretch reads FKVYFREGRDQLWKGPGILLWKGEGAVVLKYQEEIKIVPRRKCKIIKD.

As to quaternary structure, homotrimer. Interacts with gp41 (via C-terminus). In terms of assembly, homodimer. The active site consists of two apposed aspartic acid residues. Heterodimer of p66 RT and p51 RT (RT p66/p51). Heterodimerization of RT is essential for DNA polymerase activity. Despite the sequence identities, p66 RT and p51 RT have distinct folding. As to quaternary structure, homotetramer; may further associate as a homohexadecamer. Mg(2+) is required as a cofactor. Post-translationally, specific enzymatic cleavages by the viral protease yield mature proteins. The protease is released by autocatalytic cleavage. The polyprotein is cleaved during and after budding, this process is termed maturation. Proteolytic cleavage of p66 RT removes the RNase H domain to yield the p51 RT subunit. Capsid protein p24 is phosphorylated.

It localises to the virion. It is found in the host nucleus. The protein resides in the host cytoplasm. The protein localises to the host cell membrane. The catalysed reaction is Specific for a P1 residue that is hydrophobic, and P1' variable, but often Pro.. It carries out the reaction Endohydrolysis of RNA in RNA/DNA hybrids. Three different cleavage modes: 1. sequence-specific internal cleavage of RNA. Human immunodeficiency virus type 1 and Moloney murine leukemia virus enzymes prefer to cleave the RNA strand one nucleotide away from the RNA-DNA junction. 2. RNA 5'-end directed cleavage 13-19 nucleotides from the RNA end. 3. DNA 3'-end directed cleavage 15-20 nucleotides away from the primer terminus.. The enzyme catalyses 3'-end directed exonucleolytic cleavage of viral RNA-DNA hybrid.. It catalyses the reaction DNA(n) + a 2'-deoxyribonucleoside 5'-triphosphate = DNA(n+1) + diphosphate. With respect to regulation, the viral protease is inhibited by many synthetic protease inhibitors (PIs), such as amprenavir, atazanavir, indinavir, loprinavir, nelfinavir, ritonavir and saquinavir. RT can be inhibited either by nucleoside RT inhibitors (NRTIs) or by non nucleoside RT inhibitors (NNRTIs). NRTIs act as chain terminators, whereas NNRTIs inhibit DNA polymerization by binding a small hydrophobic pocket near the RT active site and inducing an allosteric change in this region. Classical NRTIs are abacavir, adefovir (PMEA), didanosine (ddI), lamivudine (3TC), stavudine (d4T), tenofovir (PMPA), zalcitabine (ddC), and zidovudine (AZT). Classical NNRTIs are atevirdine (BHAP U-87201E), delavirdine, efavirenz (DMP-266), emivirine (I-EBU), and nevirapine (BI-RG-587). The tritherapies used as a basic effective treatment of AIDS associate two NRTIs and one NNRTI. Use of protease inhibitors in tritherapy regimens permit more ambitious therapeutic strategies. In terms of biological role, gag-Pol polyprotein and Gag polyprotein may regulate their own translation, by the binding genomic RNA in the 5'-UTR. At low concentration, Gag-Pol and Gag would promote translation, whereas at high concentration, the polyproteins encapsidate genomic RNA and then shut off translation. Its function is as follows. Matrix protein p17 has two main functions: in infected cell, it targets Gag and Gag-pol polyproteins to the plasma membrane via a multipartite membrane-binding signal, that includes its myristointegration complex. The myristoylation signal and the NLS exert conflicting influences its subcellular localization. The key regulation of these motifs might be phosphorylation of a portion of MA molecules on the C-terminal tyrosine at the time of virus maturation, by virion-associated cellular tyrosine kinase. Implicated in the release from host cell mediated by Vpu. Functionally, capsid protein p24 forms the conical core that encapsulates the genomic RNA-nucleocapsid complex in the virion. The core is constituted by capsid protein hexamer subunits. The core is disassembled soon after virion entry. Interaction with host PPIA/CYPA protects the virus from restriction by host TRIM5-alpha and from an unknown antiviral activity in host cells. This capsid restriction by TRIM5 is one of the factors which restricts SIV to the simian species. Nucleocapsid protein p7 encapsulates and protects viral dimeric unspliced (genomic) RNA. Binds these RNAs through its zinc fingers. Facilitates rearangement of nucleic acid secondary structure during retrotranscription of genomic RNA. This capability is referred to as nucleic acid chaperone activity. In terms of biological role, the aspartyl protease mediates proteolytic cleavages of Gag and Gag-Pol polyproteins during or shortly after the release of the virion from the plasma membrane. Cleavages take place as an ordered, step-wise cascade to yield mature proteins. This process is called maturation. Displays maximal activity during the budding process just prior to particle release from the cell. Also cleaves Nef and Vif, probably concomitantly with viral structural proteins on maturation of virus particles. Hydrolyzes host EIF4GI and PABP1 in order to shut off the capped cellular mRNA translation. The resulting inhibition of cellular protein synthesis serves to ensure maximal viral gene expression and to evade host immune response. Its function is as follows. Reverse transcriptase/ribonuclease H (RT) is a multifunctional enzyme that converts the viral dimeric RNA genome into dsDNA in the cytoplasm, shortly after virus entry into the cell. This enzyme displays a DNA polymerase activity that can copy either DNA or RNA templates, and a ribonuclease H (RNase H) activity that cleaves the RNA strand of RNA-DNA heteroduplexes in a partially processive 3' to 5' endonucleasic mode. Conversion of viral genomic RNA into dsDNA requires many steps. A tRNA binds to the primer-binding site (PBS) situated at the 5'-end of the viral RNA. RT uses the 3' end of the tRNA primer to perform a short round of RNA-dependent minus-strand DNA synthesis. The reading proceeds through the U5 region and ends after the repeated (R) region which is present at both ends of viral RNA. The portion of the RNA-DNA heteroduplex is digested by the RNase H, resulting in a ssDNA product attached to the tRNA primer. This ssDNA/tRNA hybridizes with the identical R region situated at the 3' end of viral RNA. This template exchange, known as minus-strand DNA strong stop transfer, can be either intra- or intermolecular. RT uses the 3' end of this newly synthesized short ssDNA to perform the RNA-dependent minus-strand DNA synthesis of the whole template. RNase H digests the RNA template except for two polypurine tracts (PPTs) situated at the 5'-end and near the center of the genome. It is not clear if both polymerase and RNase H activities are simultaneous. RNase H can probably proceed both in a polymerase-dependent (RNA cut into small fragments by the same RT performing DNA synthesis) and a polymerase-independent mode (cleavage of remaining RNA fragments by free RTs). Secondly, RT performs DNA-directed plus-strand DNA synthesis using the PPTs that have not been removed by RNase H as primers. PPTs and tRNA primers are then removed by RNase H. The 3' and 5' ssDNA PBS regions hybridize to form a circular dsDNA intermediate. Strand displacement synthesis by RT to the PBS and PPT ends produces a blunt ended, linear dsDNA copy of the viral genome that includes long terminal repeats (LTRs) at both ends. Functionally, integrase catalyzes viral DNA integration into the host chromosome, by performing a series of DNA cutting and joining reactions. This enzyme activity takes place after virion entry into a cell and reverse transcription of the RNA genome in dsDNA. The first step in the integration process is 3' processing. This step requires a complex comprising the viral genome, matrix protein, Vpr and integrase. This complex is called the pre-integration complex (PIC). The integrase protein removes 2 nucleotides from each 3' end of the viral DNA, leaving recessed CA OH's at the 3' ends. In the second step, the PIC enters cell nucleus. This process is mediated through integrase and Vpr proteins, and allows the virus to infect a non dividing cell. This ability to enter the nucleus is specific of lentiviruses, other retroviruses cannot and rely on cell division to access cell chromosomes. In the third step, termed strand transfer, the integrase protein joins the previously processed 3' ends to the 5' ends of strands of target cellular DNA at the site of integration. The 5'-ends are produced by integrase-catalyzed staggered cuts, 5 bp apart. A Y-shaped, gapped, recombination intermediate results, with the 5'-ends of the viral DNA strands and the 3' ends of target DNA strands remaining unjoined, flanking a gap of 5 bp. The last step is viral DNA integration into host chromosome. This involves host DNA repair synthesis in which the 5 bp gaps between the unjoined strands are filled in and then ligated. Since this process occurs at both cuts flanking the SIV genome, a 5 bp duplication of host DNA is produced at the ends of SIV integration. Alternatively, Integrase may catalyze the excision of viral DNA just after strand transfer, this is termed disintegration. This Cercopithecidae (Old World monkeys) protein is Gag-Pol polyprotein (gag-pol).